Consider the following 583-residue polypeptide: Chloroplast sensor kinase, chloroplastic (583 aa).

The N-terminal 50 residues, 1–50, are a transit peptide targeting the chloroplast; it reads MSSIYLHGLSRRRRIGSVIVAIYMLDSCGAFLSASGSGRYPGFSYRGLSV. Residues 97-277 form a GAF region; the sequence is LFQELALSQL…SMDTERAALQ (181 aa). Cys115 provides a ligand contact to [3Fe-4S] cluster. Residue His292 is modified to Phosphohistidine; by autocatalysis. The tract at residues 412-442 is disordered; it reads AASGSNGPSNSTTSFSGNGSDVSTYTEDDGA. Low complexity predominate over residues 414–431; that stretch reads SGSNGPSNSTTSFSGNGS. A Histidine kinase domain is found at 447–583; sequence SSLFSEMDLE…ALDWTLRKHW (137 aa).

It belongs to the chloroplast sensor kinase protein family. In terms of assembly, oligomerizes. [3Fe-4S] cluster serves as cofactor. Post-translationally, autophosphorylates, possibly on His-292.

Its subcellular location is the plastid. The protein resides in the chloroplast stroma. The enzyme catalyses ATP + protein L-histidine = ADP + protein N-phospho-L-histidine.. Sensor kinase that senses the plastoquinone (PQ) redox state involved in stoichiometry adjustment of both photosystems (e.g. long-term adaptation via transcriptional regulation of reaction center genes of photosystems I and II) and state transitions (e.g. short-term adaptation involving reversible post-translational phosphorylation of light-harvesting complex II, LHC II), thus linking photosynthesis with gene expression in chloroplasts. Reduced PQ suppresses its autophosphorylation activity. This is Chloroplast sensor kinase, chloroplastic from Phaeodactylum tricornutum (strain CCAP 1055/1).